The following is a 410-amino-acid chain: Hemocyanin, beta-C chain unit D (410 aa).

Cu cation is bound by residues His-44 and His-55. A disulfide bridge connects residues Cys-50 and Cys-59. The 2'-(S-cysteinyl)-histidine (Cys-His) cross-link spans 60–62 (CVH). Residues His-71, His-175, His-179, and His-206 each contribute to the Cu cation site. A disulfide bridge connects residues Cys-165 and Cys-232. Asn-253 carries N-linked (GlcNAc...) asparagine glycosylation. Cys-321 and Cys-332 are oxidised to a cystine.

This sequence belongs to the tyrosinase family. Hemocyanin subfamily. In terms of assembly, decamers of large identical subunits (450 kDa), each containing 8 globular oxygen-binding functional units. It depends on Cu(2+) as a cofactor.

Functionally, hemocyanins are copper-containing oxygen carriers occurring freely dissolved in the hemolymph of many mollusks and arthropods. In Helix pomatia (Roman snail), this protein is Hemocyanin, beta-C chain unit D.